The chain runs to 166 residues: Monodehydroascorbate reductase, fruit isozyme (166 aa).

The protein belongs to the FAD-dependent oxidoreductase family. FAD serves as cofactor. The N-terminus is blocked.

The enzyme catalyses 2 monodehydro-L-ascorbate radical + NADH + H(+) = 2 L-ascorbate + NAD(+). Its function is as follows. Catalyzes the conversion of monodehydroascorbate to ascorbate, oxidizing NADH in the process. This Cucumis sativus (Cucumber) protein is Monodehydroascorbate reductase, fruit isozyme.